The sequence spans 204 residues: GTP cyclohydrolase 1 (204 aa).

Cysteine 92, histidine 95, and cysteine 165 together coordinate Zn(2+).

It belongs to the GTP cyclohydrolase I family. In terms of assembly, homomer.

The catalysed reaction is GTP + H2O = 7,8-dihydroneopterin 3'-triphosphate + formate + H(+). It functions in the pathway cofactor biosynthesis; 7,8-dihydroneopterin triphosphate biosynthesis; 7,8-dihydroneopterin triphosphate from GTP: step 1/1. This is GTP cyclohydrolase 1 from Mycobacteroides abscessus (strain ATCC 19977 / DSM 44196 / CCUG 20993 / CIP 104536 / JCM 13569 / NCTC 13031 / TMC 1543 / L948) (Mycobacterium abscessus).